An 89-amino-acid polypeptide reads, in one-letter code: Small ribosomal subunit protein uS14 (89 aa).

It belongs to the universal ribosomal protein uS14 family. Part of the 30S ribosomal subunit. Contacts proteins S3 and S10.

Binds 16S rRNA, required for the assembly of 30S particles and may also be responsible for determining the conformation of the 16S rRNA at the A site. This Leuconostoc mesenteroides subsp. mesenteroides (strain ATCC 8293 / DSM 20343 / BCRC 11652 / CCM 1803 / JCM 6124 / NCDO 523 / NBRC 100496 / NCIMB 8023 / NCTC 12954 / NRRL B-1118 / 37Y) protein is Small ribosomal subunit protein uS14.